Reading from the N-terminus, the 212-residue chain is Proteasome subunit beta type-2 (212 aa).

This sequence belongs to the peptidase T1B family. The 26S proteasome consists of a 20S proteasome core and two 19S regulatory subunits. The 20S proteasome core is composed of 28 subunits that are arranged in four stacked rings, resulting in a barrel-shaped structure. The two end rings are each formed by seven alpha subunits, and the two central rings are each formed by seven beta subunits. The catalytic chamber with the active sites is on the inside of the barrel.

Its subcellular location is the cytoplasm. The protein resides in the nucleus. Functionally, non-catalytic component of the proteasome, a multicatalytic proteinase complex which is characterized by its ability to cleave peptides with Arg, Phe, Tyr, Leu, and Glu adjacent to the leaving group at neutral or slightly basic pH. The proteasome has an ATP-dependent proteolytic activity. The sequence is that of Proteasome subunit beta type-2 (PBD1) from Oryza sativa subsp. japonica (Rice).